A 274-amino-acid polypeptide reads, in one-letter code: Large ribosomal subunit protein uL2cz/uL2cy (274 aa).

Disordered stretches follow at residues 1-22 (MAIH…DSQV) and 223-274 (MNPV…RRTK).

The protein belongs to the universal ribosomal protein uL2 family. As to quaternary structure, part of the 50S ribosomal subunit.

Its subcellular location is the plastid. It localises to the chloroplast. This chain is Large ribosomal subunit protein uL2cz/uL2cy (rpl2-A), found in Phaseolus vulgaris (Kidney bean).